The following is a 462-amino-acid chain: MDAMQKTIEYTSVSRIAGPLMVIDGIEGIAYGEIVDITTPNGDKRTGQVLEAREEIAVVQVFEGTSELNTSETKVRFTGDTAKIGVSYDMLGRIFNGAGKPLDGGPEIIAEKKLDINGYPLNPVSRNPPNAFVQTGISTIDGTNTLVRGQKIPIFSGSGLPHNKLATQIARQAKVRGEGEQFAVVFAAMGITGEESNYFMDEFKKTGALEKAVVFINLADDPAIERILTPRIALTTAEYLAYEKGMHVLVILTDLTNYCEALREIAAARNEVPGRRGYPGYMYTDLACLYERAGRVKGREGTVTQIPILTMPDDDITHPIPDLTGYITEGQIVLSRELNRKGIYPPVDILPSLSRLAGNGQGEGKTRDDHSKVISQAYAAYAEGRGLRDLVAVVGEEALTERDRSFLKFADAFENSIVTQGVDEDRSIEETLDYVWDLLTILPREELKRVSDELIEKYLPKK.

Belongs to the ATPase alpha/beta chains family. Has multiple subunits with at least A(3), B(3), C, D, E, F, H, I and proteolipid K(x).

It is found in the cell membrane. Its function is as follows. Component of the A-type ATP synthase that produces ATP from ADP in the presence of a proton gradient across the membrane. The B chain is a regulatory subunit. This chain is A-type ATP synthase subunit B, found in Methanococcus maripaludis (strain C7 / ATCC BAA-1331).